The sequence spans 320 residues: Carbonic anhydrase 6 (320 aa).

An N-terminal signal peptide occupies residues 1–17 (MRALALLLALPLLGARA). The Alpha-carbonic anhydrase domain occupies 21-278 (SLWTYSEGAL…LNGRVVESNF (258 aa)). Cysteines 42 and 224 form a disulfide. His-85 acts as the Proton donor/acceptor in catalysis. Residues His-111, His-113, and His-138 each coordinate Zn(2+). 220–221 (TT) is a substrate binding site. Asn-256 carries N-linked (GlcNAc...) asparagine glycosylation.

Belongs to the alpha-carbonic anhydrase family. Requires Zn(2+) as cofactor.

Its subcellular location is the secreted. It carries out the reaction hydrogencarbonate + H(+) = CO2 + H2O. Reversible hydration of carbon dioxide. Its role in saliva is unknown. The sequence is that of Carbonic anhydrase 6 (CA6) from Canis lupus familiaris (Dog).